A 241-amino-acid chain; its full sequence is Peroxisomal membrane protein 11C (241 aa).

The Cytoplasmic portion of the chain corresponds to 1 to 122; it reads MALLNRLASA…ADAKVLRVDS (122 aa). A helical transmembrane segment spans residues 123–149; the sequence is AWWWTLNTALWTLSLLLGAVKALWTML. Topologically, residues 150 to 211 are lumenal; the sequence is KLRQKLRSPT…GVLWAGRFPP (62 aa). A helical membrane pass occupies residues 212–227; the sequence is WLVGLMGTISSILSTC. Residues 228 to 241 are Cytoplasmic-facing; sequence QAVRAGRQAEADSP.

The protein belongs to the peroxin-11 family. In terms of assembly, homodimer. Heterodimer with either PEX11A or PEX11B. Interacts with FIS1. In terms of tissue distribution, expressed in liver and at much lower levels in heart, kidney and testis.

Its subcellular location is the peroxisome membrane. In terms of biological role, promotes membrane protrusion and elongation on the peroxisomal surface. The sequence is that of Peroxisomal membrane protein 11C (Pex11g) from Mus musculus (Mouse).